The chain runs to 429 residues: Dihydroorotase (429 aa).

Zn(2+) is bound by residues histidine 59 and histidine 61. Residues 61–63 (HLR) and asparagine 93 each bind substrate. Residues lysine 143, histidine 171, histidine 229, and aspartate 298 each contribute to the Zn(2+) site. Lysine 143 carries the post-translational modification N6-carboxylysine. The active site involves aspartate 298. Substrate is bound by residues histidine 302 and 316–317 (AG).

It belongs to the metallo-dependent hydrolases superfamily. DHOase family. Class I DHOase subfamily. Zn(2+) serves as cofactor.

The catalysed reaction is (S)-dihydroorotate + H2O = N-carbamoyl-L-aspartate + H(+). It participates in pyrimidine metabolism; UMP biosynthesis via de novo pathway; (S)-dihydroorotate from bicarbonate: step 3/3. Its function is as follows. Catalyzes the reversible cyclization of carbamoyl aspartate to dihydroorotate. The sequence is that of Dihydroorotase from Methanosphaera stadtmanae (strain ATCC 43021 / DSM 3091 / JCM 11832 / MCB-3).